The primary structure comprises 414 residues: Protein ABHD18 (414 aa).

The first 24 residues, 1-24, serve as a signal peptide directing secretion; that stretch reads MGVSKLDILYRRLLLTKLFIRGWG. Asn-282 and Asn-307 each carry an N-linked (GlcNAc...) asparagine glycan.

This sequence belongs to the AB hydrolase superfamily.

The protein resides in the secreted. This is Protein ABHD18 from Homo sapiens (Human).